Here is a 156-residue protein sequence, read N- to C-terminus: uncharacterized protein (156 aa).

The first 27 residues, 1–27, serve as a signal peptide directing secretion; that stretch reads MKLLVLRLILIISTIFVLLNLSCMVNG. N-linked (GlcNAc...) asparagine glycosylation is found at asparagine 20, asparagine 83, asparagine 103, asparagine 106, and asparagine 134.

It localises to the secreted. This is an uncharacterized protein from Dictyostelium discoideum (Social amoeba).